Consider the following 890-residue polypeptide: tRNase Z TRZ3, mitochondrial (890 aa).

The transit peptide at 1–44 (MINSMPYLHKNLRLLRLLSSKSSPFPLSLRPFSPRSFSLSTLFS) directs the protein to the mitochondrion. Residues 46 to 67 (SSSSSSMENNEATNGSKSSSNS) are disordered.

This sequence belongs to the RNase Z family. In terms of assembly, homodimer. Requires Zn(2+) as cofactor. Ca(2+) serves as cofactor. The cofactor is Mn(2+). Mg(2+) is required as a cofactor.

It is found in the mitochondrion. The protein resides in the nucleus. It carries out the reaction Endonucleolytic cleavage of RNA, removing extra 3' nucleotides from tRNA precursor, generating 3' termini of tRNAs. A 3'-hydroxy group is left at the tRNA terminus and a 5'-phosphoryl group is left at the trailer molecule.. In terms of biological role, zinc phosphodiesterase, which displays tRNA 3'-processing endonuclease activity. Involved in tRNA maturation, by removing a 3'-trailer from precursor tRNA. Can process the mitochondrial tRNA-like structures (t-elements). Involved in the processing of small nucleolar RNAs (snoRNAs). This Arabidopsis thaliana (Mouse-ear cress) protein is tRNase Z TRZ3, mitochondrial.